The chain runs to 132 residues: Small ribosomal subunit protein uS8 (132 aa).

It belongs to the universal ribosomal protein uS8 family. In terms of assembly, part of the 30S ribosomal subunit. Contacts proteins S5 and S12.

One of the primary rRNA binding proteins, it binds directly to 16S rRNA central domain where it helps coordinate assembly of the platform of the 30S subunit. The polypeptide is Small ribosomal subunit protein uS8 (Lactococcus lactis subsp. cremoris (strain MG1363)).